The chain runs to 210 residues: Na(+)-translocating NADH-quinone reductase subunit D (210 aa).

The next 6 membrane-spanning stretches (helical) occupy residues 9–29 (SVLI…LGVC), 42–62 (LVMT…ISLI), 72–92 (IIVQ…VLQA), 103–123 (VFVG…AFAM), 131–151 (FMDG…VGFV), and 178–198 (NGLL…IWII).

The protein belongs to the NqrDE/RnfAE family. In terms of assembly, composed of six subunits; NqrA, NqrB, NqrC, NqrD, NqrE and NqrF.

The protein localises to the cell inner membrane. It catalyses the reaction a ubiquinone + n Na(+)(in) + NADH + H(+) = a ubiquinol + n Na(+)(out) + NAD(+). Its function is as follows. NQR complex catalyzes the reduction of ubiquinone-1 to ubiquinol by two successive reactions, coupled with the transport of Na(+) ions from the cytoplasm to the periplasm. NqrA to NqrE are probably involved in the second step, the conversion of ubisemiquinone to ubiquinol. This Shewanella piezotolerans (strain WP3 / JCM 13877) protein is Na(+)-translocating NADH-quinone reductase subunit D.